The primary structure comprises 130 residues: Small ribosomal subunit protein uS11 (130 aa).

This sequence belongs to the universal ribosomal protein uS11 family. Part of the 30S ribosomal subunit. Interacts with proteins S7 and S18. Binds to IF-3.

Located on the platform of the 30S subunit, it bridges several disparate RNA helices of the 16S rRNA. Forms part of the Shine-Dalgarno cleft in the 70S ribosome. This is Small ribosomal subunit protein uS11 from Prochlorococcus marinus (strain MIT 9312).